Consider the following 344-residue polypeptide: Protein-arginine kinase (344 aa).

A Phosphagen kinase C-terminal domain is found at 14-244 (IVLSSRIRLA…KQIIQQERLA (231 aa)). ATP contacts are provided by residues 17–21 (SSRIR), H81, R115, 166–170 (RASAM), and 197–202 (RGLYGE).

It belongs to the ATP:guanido phosphotransferase family.

The enzyme catalyses L-arginyl-[protein] + ATP = N(omega)-phospho-L-arginyl-[protein] + ADP + H(+). In terms of biological role, catalyzes the specific phosphorylation of arginine residues in proteins. The polypeptide is Protein-arginine kinase (Clostridium novyi (strain NT)).